We begin with the raw amino-acid sequence, 258 residues long: Imidazole glycerol phosphate synthase subunit HisF (258 aa).

Catalysis depends on residues D11 and D130.

It belongs to the HisA/HisF family. Heterodimer of HisH and HisF.

Its subcellular location is the cytoplasm. It carries out the reaction 5-[(5-phospho-1-deoxy-D-ribulos-1-ylimino)methylamino]-1-(5-phospho-beta-D-ribosyl)imidazole-4-carboxamide + L-glutamine = D-erythro-1-(imidazol-4-yl)glycerol 3-phosphate + 5-amino-1-(5-phospho-beta-D-ribosyl)imidazole-4-carboxamide + L-glutamate + H(+). Its pathway is amino-acid biosynthesis; L-histidine biosynthesis; L-histidine from 5-phospho-alpha-D-ribose 1-diphosphate: step 5/9. In terms of biological role, IGPS catalyzes the conversion of PRFAR and glutamine to IGP, AICAR and glutamate. The HisF subunit catalyzes the cyclization activity that produces IGP and AICAR from PRFAR using the ammonia provided by the HisH subunit. In Shigella dysenteriae serotype 1 (strain Sd197), this protein is Imidazole glycerol phosphate synthase subunit HisF.